The chain runs to 49 residues: Large ribosomal subunit protein bL33 (49 aa).

Belongs to the bacterial ribosomal protein bL33 family.

The chain is Large ribosomal subunit protein bL33 from Leuconostoc citreum (strain KM20).